A 429-amino-acid chain; its full sequence is Chaperone SurA (429 aa).

An N-terminal signal peptide occupies residues 1–19 (MKKTLLALLIASVMQSALA). PpiC domains follow at residues 172-273 (RTEY…KLVD) and 283-381 (VEQY…LVEG).

The protein localises to the periplasm. It carries out the reaction [protein]-peptidylproline (omega=180) = [protein]-peptidylproline (omega=0). Chaperone involved in the correct folding and assembly of outer membrane proteins. Recognizes specific patterns of aromatic residues and the orientation of their side chains, which are found more frequently in integral outer membrane proteins. May act in both early periplasmic and late outer membrane-associated steps of protein maturation. The sequence is that of Chaperone SurA from Chromobacterium violaceum (strain ATCC 12472 / DSM 30191 / JCM 1249 / CCUG 213 / NBRC 12614 / NCIMB 9131 / NCTC 9757 / MK).